The chain runs to 305 residues: MNMSNMAIDLVGVRKSFGDKVIVNDLSFSVARGECFGLLGPNGAGKSTIARMLLGMIWPDRGKITVLDEPVPSRARARRGVGVVPQFDNLEPEFTVRENLLVFGRYFGMSARTIEAVVPSLLEFARLESKADVRVSLLGGGMKRRLTLARALINDPHLLVMDEPTTGLDPHARHLIWERLRALLARGKTILLTTHFMEEAERLCDPLCVLESGCKIAEGEPDALIDEHIGCNVIEIYGGDLDQLRELIRPYARHIEVSGETLFCYARCPDEISVHLRGRTGLRVLQRPPNLEDVFLRLTGREMEK.

In terms of domain architecture, ABC transporter spans 8-237 (IDLVGVRKSF…HIGCNVIEIY (230 aa)). 40–47 (GPNGAGKS) contacts ATP.

The protein belongs to the ABC transporter superfamily. Lipooligosaccharide exporter (TC 3.A.1.102) family. In terms of assembly, the complex is composed of two ATP-binding proteins (NodI) and two transmembrane proteins (NodJ).

Its subcellular location is the cell inner membrane. Its function is as follows. Part of the ABC transporter complex NodIJ involved in the export of the nodulation factors (Nod factors), the bacterial signal molecules that induce symbiosis and subsequent nodulation induction. Nod factors are LCO (lipo-chitin oligosaccharide), a modified beta-1,4-linked N-acetylglucosamine oligosaccharide. This subunit is responsible for energy coupling to the transport system. The chain is Nod factor export ATP-binding protein I from Bradyrhizobium sp. (strain SNU001).